The sequence spans 695 residues: Frizzled and smoothened-like protein O (695 aa).

The signal sequence occupies residues 1 to 23 (MKKLNYLLIVSFIFILNLLISKS). Over 24-233 (QVLIDVTAKC…KEYKTKFYSE (210 aa)) the chain is Extracellular. The FZ domain maps to 28 to 173 (DVTAKCELID…ANEEIQCSGP (146 aa)). Disulfide bonds link Cys33/Cys96, Cys42/Cys89, Cys80/Cys125, Cys114/Cys170, and Cys118/Cys138. An N-linked (GlcNAc...) asparagine glycan is attached at Asn47. Residues Asn137 and Asn178 are each glycosylated (N-linked (GlcNAc...) asparagine). The chain crosses the membrane as a helical span at residues 234–254 (AILFSFSTACSFYLIFTFGVF). The Cytoplasmic portion of the chain corresponds to 255–262 (PNKYTNRN). A helical membrane pass occupies residues 263 to 283 (WIIVYLGITAICLAISYAVQE). Residues 284–307 (ARYGGGDWRCTSDPGRYKSSEDGT) are Extracellular-facing. A helical membrane pass occupies residues 308–328 (CILGGFFFQIGGLGTILFLSL). Over 329–343 (YSFDMFLTMNMMTNK) the chain is Cytoplasmic. The chain crosses the membrane as a helical span at residues 344–364 (YFIQTSVGMWALIIFYALLPI). Over 365 to 387 (KHYESSIASAGCWLSNEDNMFWQ) the chain is Extracellular. A helical membrane pass occupies residues 388–408 (YFCFYVPSYVATFFLGVFIIT). At 409–435 (SIYKVFKMTVMFKSIKDKRILLLNIRS) the chain is on the cytoplasmic side. Residues 436–456 (IIFLIAIMFCVSFSTMYPLYV) traverse the membrane as a helical segment. At 457–500 (TYNGDDFSKSVEVYVTCLYANIPNGNEVCPQIVFPQFSLRYMNA) the chain is on the extracellular side. The chain crosses the membrane as a helical span at residues 501-521 (ITMAIIGIVGLIGLGIDPHIL). Residues 522–695 (QIYRESIRFK…NIERINSDNV (174 aa)) lie on the Cytoplasmic side of the membrane. Polar residues predominate over residues 545–556 (SPQPLKQGSTTD). The segment at 545 to 695 (SPQPLKQGST…NIERINSDNV (151 aa)) is disordered. Residues 593–608 (NLSASSESSNNLLNQS) show a composition bias toward low complexity. Residues 609-625 (TPGNLNINESISSIDTS) are compositionally biased toward polar residues. A compositionally biased stretch (low complexity) spans 626–686 (NNNNNNNNNN…NNNNNNNNNN (61 aa)). A coiled-coil region spans residues 653-691 (NNNNNNNNNNNNNNNNNNNNYSNNNNNNNNNNNNIERIN).

The protein belongs to the G-protein coupled receptor Fz/Smo family.

The protein localises to the membrane. The sequence is that of Frizzled and smoothened-like protein O (fslO) from Dictyostelium discoideum (Social amoeba).